The primary structure comprises 345 residues: Uroporphyrinogen decarboxylase (345 aa).

Substrate contacts are provided by residues 27 to 31 (RQAGR), D77, Y152, S207, and H323.

This sequence belongs to the uroporphyrinogen decarboxylase family. As to quaternary structure, homodimer.

It is found in the cytoplasm. It carries out the reaction uroporphyrinogen III + 4 H(+) = coproporphyrinogen III + 4 CO2. It functions in the pathway porphyrin-containing compound metabolism; protoporphyrin-IX biosynthesis; coproporphyrinogen-III from 5-aminolevulinate: step 4/4. Its function is as follows. Catalyzes the decarboxylation of four acetate groups of uroporphyrinogen-III to yield coproporphyrinogen-III. The polypeptide is Uroporphyrinogen decarboxylase (Maricaulis maris (strain MCS10) (Caulobacter maris)).